Consider the following 424-residue polypeptide: Adenylosuccinate synthetase (424 aa).

Residues 11-17 (GDEGKGK) and 39-41 (GHT) contribute to the GTP site. Asp-12 acts as the Proton acceptor in catalysis. Mg(2+)-binding residues include Asp-12 and Gly-39. Residues 12-15 (DEGK), 37-40 (NAGH), Thr-127, Arg-141, Gln-223, Thr-238, and Arg-302 contribute to the IMP site. His-40 acts as the Proton donor in catalysis. 298-304 (TTTGRGR) provides a ligand contact to substrate. GTP-binding positions include Arg-304, 330–332 (KLD), and 412–414 (SVG).

The protein belongs to the adenylosuccinate synthetase family. In terms of assembly, homodimer. It depends on Mg(2+) as a cofactor.

It is found in the cytoplasm. The catalysed reaction is IMP + L-aspartate + GTP = N(6)-(1,2-dicarboxyethyl)-AMP + GDP + phosphate + 2 H(+). It functions in the pathway purine metabolism; AMP biosynthesis via de novo pathway; AMP from IMP: step 1/2. In terms of biological role, plays an important role in the de novo pathway of purine nucleotide biosynthesis. Catalyzes the first committed step in the biosynthesis of AMP from IMP. The polypeptide is Adenylosuccinate synthetase (Methanosarcina barkeri (strain Fusaro / DSM 804)).